The primary structure comprises 241 residues: DnaA regulatory inactivator Hda (241 aa).

The protein belongs to the DnaA family. HdA subfamily. In terms of assembly, the active form seems to be an ADP-bound monomer. Forms the RIDA complex (regulatory inactivation of DnaA) of ATP-DnaA, ADP-Hda and the DNA-loaded beta sliding clamp (dnaN).

Mediates the interaction of DNA replication initiator protein DnaA with DNA polymerase subunit beta sliding clamp (dnaN). Stimulates hydrolysis of ATP-DnaA to ADP-DnaA, rendering DnaA inactive for reinitiation, a process called regulatory inhibition of DnaA or RIDA. The sequence is that of DnaA regulatory inactivator Hda from Salmonella agona (strain SL483).